The following is a 156-amino-acid chain: Large ribosomal subunit protein uL15 (156 aa).

A disordered region spans residues 26–46; the sequence is GIGCGKGKTSGRGHKGQKARS. Residues 34 to 43 are compositionally biased toward basic residues; the sequence is TSGRGHKGQK.

This sequence belongs to the universal ribosomal protein uL15 family. In terms of assembly, part of the 50S ribosomal subunit.

Functionally, binds to the 23S rRNA. The polypeptide is Large ribosomal subunit protein uL15 (Ehrlichia canis (strain Jake)).